A 551-amino-acid chain; its full sequence is Prunin 1 Pru du 6.0101 (551 aa).

A signal peptide spans 1–20; the sequence is MAKAFVFSLCLLLVFNGCLA. Disulfide bonds link Cys-32–Cys-65 and Cys-108–Cys-374. In terms of domain architecture, Cupin type-1 1 spans 37 to 312; it reads LQAREPDNRI…ALNVNEETAR (276 aa). 3 disordered regions span residues 111 to 194, 238 to 293, and 311 to 361; these read TFEE…QKTR, NPRK…NVFS, and ARNL…QQQG. Composition is skewed to low complexity over residues 114–124, 132–148, and 168–185; these read ESQQSSQQGRQ, QQQQ…QQEQ, and QEQQ…QQFR. 4 igE-binding regions span residues 118 to 132, 145 to 159, 161 to 175, and 225 to 239; these read SSQQ…QERQ, QQEQ…QQGR, QQEE…QGQQ, and LFHV…DQNP. The span at 254 to 275 shows a compositional bias: low complexity; the sequence is QQGQSQPRQQGEQGRPGQHQQP. The igE-binding stretch occupies residues 281 to 295; the sequence is QQEQQGSGNNVFSGF. Polar residues-rich tracts occupy residues 282–293 and 311–323; these read QEQQGSGNNVFS and ARNL…NRNQ. Basic and acidic residues predominate over residues 339–350; that stretch reads GRQEREHEERQQ. The span at 351 to 361 shows a compositional bias: low complexity; it reads EQLQQERQQQG. The NGXEET; peptidase recognition motif signature appears at 367 to 372; it reads NGLEET. A Cupin type-1 2 domain is found at 380-529; the sequence is ENIGNPERAD…AYQISREQAR (150 aa). Positions 510–524 are igE-binding; that stretch reads RALPDEVLANAYQIS.

Belongs to the 11S seed storage protein (globulins) family. As to quaternary structure, hexamer of two trimers; each subunit is composed of an acidic and a basic chain derived from a single precursor and linked by a disulfide bond. In terms of processing, proteolytically processed from a single precursor to produce an acidic and a basic chain that are linked by a disulfide bond. In terms of tissue distribution, expressed in seed (at protein level).

Its function is as follows. Seed storage protein. The sequence is that of Prunin 1 Pru du 6.0101 from Prunus dulcis (Almond).